Consider the following 600-residue polypeptide: Elongation factor 4 (600 aa).

The tr-type G domain maps to 4–186 (SKIRNFSIIA…EIVKKIPAPQ (183 aa)). GTP contacts are provided by residues 16–21 (DHGKST) and 133–136 (NKID).

Belongs to the TRAFAC class translation factor GTPase superfamily. Classic translation factor GTPase family. LepA subfamily.

The protein localises to the cell inner membrane. The enzyme catalyses GTP + H2O = GDP + phosphate + H(+). Functionally, required for accurate and efficient protein synthesis under certain stress conditions. May act as a fidelity factor of the translation reaction, by catalyzing a one-codon backward translocation of tRNAs on improperly translocated ribosomes. Back-translocation proceeds from a post-translocation (POST) complex to a pre-translocation (PRE) complex, thus giving elongation factor G a second chance to translocate the tRNAs correctly. Binds to ribosomes in a GTP-dependent manner. This Trichlorobacter lovleyi (strain ATCC BAA-1151 / DSM 17278 / SZ) (Geobacter lovleyi) protein is Elongation factor 4.